The sequence spans 322 residues: CRISPR-associated endonuclease Cas1 (322 aa).

Mn(2+) contacts are provided by Glu-149, His-214, and Glu-229.

This sequence belongs to the CRISPR-associated endonuclease Cas1 family. In terms of assembly, homodimer, forms a heterotetramer with a Cas2 homodimer. Mg(2+) is required as a cofactor. Mn(2+) serves as cofactor.

CRISPR (clustered regularly interspaced short palindromic repeat), is an adaptive immune system that provides protection against mobile genetic elements (viruses, transposable elements and conjugative plasmids). CRISPR clusters contain spacers, sequences complementary to antecedent mobile elements, and target invading nucleic acids. CRISPR clusters are transcribed and processed into CRISPR RNA (crRNA). Acts as a dsDNA endonuclease. Involved in the integration of spacer DNA into the CRISPR cassette. The sequence is that of CRISPR-associated endonuclease Cas1 from Pyrococcus horikoshii (strain ATCC 700860 / DSM 12428 / JCM 9974 / NBRC 100139 / OT-3).